The primary structure comprises 232 residues: Orotidine 5'-phosphate decarboxylase (232 aa).

Residues Asp-12, Lys-34, 61–70 (DMKLLDIDNT), Thr-116, Arg-177, Gln-186, Gly-206, and Arg-207 contribute to the substrate site. Lys-63 serves as the catalytic Proton donor.

This sequence belongs to the OMP decarboxylase family. Type 1 subfamily. Homodimer.

The enzyme catalyses orotidine 5'-phosphate + H(+) = UMP + CO2. The protein operates within pyrimidine metabolism; UMP biosynthesis via de novo pathway; UMP from orotate: step 2/2. Functionally, catalyzes the decarboxylation of orotidine 5'-monophosphate (OMP) to uridine 5'-monophosphate (UMP). The polypeptide is Orotidine 5'-phosphate decarboxylase (Sinorhizobium medicae (strain WSM419) (Ensifer medicae)).